The chain runs to 323 residues: Mediator of RNA polymerase II transcription subunit 6 (323 aa).

Disordered stretches follow at residues 172–213 (FTPS…DAAG) and 271–323 (TDRT…KVGS). Residues 189 to 203 (DASQPGTQSQQSKEN) show a composition bias toward polar residues. Over residues 276–285 (AAKPPATAAK) the composition is skewed to low complexity. Residues 314–323 (MRKKKTKVGS) show a composition bias toward basic residues.

It belongs to the Mediator complex subunit 6 family. In terms of assembly, component of the Mediator complex.

The protein localises to the nucleus. Its function is as follows. Component of the Mediator complex, a coactivator involved in the regulated transcription of nearly all RNA polymerase II-dependent genes. Mediator functions as a bridge to convey information from gene-specific regulatory proteins to the basal RNA polymerase II transcription machinery. Mediator is recruited to promoters by direct interactions with regulatory proteins and serves as a scaffold for the assembly of a functional preinitiation complex with RNA polymerase II and the general transcription factors. This Aspergillus niger (strain ATCC MYA-4892 / CBS 513.88 / FGSC A1513) protein is Mediator of RNA polymerase II transcription subunit 6 (med6).